The chain runs to 264 residues: MHKLKLHGFNNLTKSLSFCIYDICYAKSQADRDSYIAYIDEQYNANRLTEILSETCSIIGANILNIARQDYDPQGASVTILVSEEPMDPKDVDNTENPGPLPDSVVAHLDKSHICVHTYPESHPGGGICTFRADIEVSTCGVISPLKALNYLIHKLESDIVTMDYRVRGFTRDVNGMKHYIDHEISSIQNYMTEEVQSQYYMMDVNIYQENLFHTKMMLKRFDLNDYLFNATPEQLSEAEKQEITHLLKKEIQEIYYGRNLPTV.

Residue S112 is the Schiff-base intermediate with substrate; via pyruvic acid of the active site. S112 is subject to Pyruvic acid (Ser); by autocatalysis. Residue H117 is the Proton acceptor; for processing activity of the active site. C140 serves as the catalytic Proton donor; for catalytic activity.

It belongs to the prokaryotic AdoMetDC family. Type 2 subfamily. In terms of assembly, heterooctamer of four alpha and four beta chains arranged as a tetramer of alpha/beta heterodimers. It depends on pyruvate as a cofactor. In terms of processing, is synthesized initially as an inactive proenzyme. Formation of the active enzyme involves a self-maturation process in which the active site pyruvoyl group is generated from an internal serine residue via an autocatalytic post-translational modification. Two non-identical subunits are generated from the proenzyme in this reaction, and the pyruvate is formed at the N-terminus of the alpha chain, which is derived from the carboxyl end of the proenzyme. The post-translation cleavage follows an unusual pathway, termed non-hydrolytic serinolysis, in which the side chain hydroxyl group of the serine supplies its oxygen atom to form the C-terminus of the beta chain, while the remainder of the serine residue undergoes an oxidative deamination to produce ammonia and the pyruvoyl group blocking the N-terminus of the alpha chain.

It catalyses the reaction S-adenosyl-L-methionine + H(+) = S-adenosyl 3-(methylsulfanyl)propylamine + CO2. It participates in amine and polyamine biosynthesis; S-adenosylmethioninamine biosynthesis; S-adenosylmethioninamine from S-adenosyl-L-methionine: step 1/1. Its function is as follows. Catalyzes the decarboxylation of S-adenosylmethionine to S-adenosylmethioninamine (dcAdoMet), the propylamine donor required for the synthesis of the polyamines spermine and spermidine from the diamine putrescine. In Photorhabdus laumondii subsp. laumondii (strain DSM 15139 / CIP 105565 / TT01) (Photorhabdus luminescens subsp. laumondii), this protein is S-adenosylmethionine decarboxylase proenzyme.